We begin with the raw amino-acid sequence, 109 residues long: Large ribosomal subunit protein uL18c (109 aa).

Belongs to the universal ribosomal protein uL18 family. Part of the 50S ribosomal subunit; contacts the 5S rRNA.

The protein localises to the plastid. The protein resides in the chloroplast. Its function is as follows. Binds 5S rRNA, forms part of the central protuberance of the 50S subunit. This Cyanidioschyzon merolae (strain NIES-3377 / 10D) (Unicellular red alga) protein is Large ribosomal subunit protein uL18c (rpl18).